A 178-amino-acid polypeptide reads, in one-letter code: Ribosome maturation factor RimM (178 aa).

Residues 103-177 (SKDEYYFFEI…KIVVKVPEWL (75 aa)) enclose the PRC barrel domain.

The protein belongs to the RimM family. In terms of assembly, binds ribosomal protein uS19.

The protein localises to the cytoplasm. An accessory protein needed during the final step in the assembly of 30S ribosomal subunit, possibly for assembly of the head region. Essential for efficient processing of 16S rRNA. May be needed both before and after RbfA during the maturation of 16S rRNA. It has affinity for free ribosomal 30S subunits but not for 70S ribosomes. The polypeptide is Ribosome maturation factor RimM (Thermosipho africanus (strain TCF52B)).